The following is a 505-amino-acid chain: L-carnitine/gamma-butyrobetaine antiporter (505 aa).

Transmembrane regions (helical) follow at residues 10-30 (IEPKVFFPPLIIVGILCWLTV), 50-70 (IWGWAFEWYMVVMLFGWFWLV), 92-112 (IFMMFASCTSAAVLFWGSIEI), 143-163 (GPLPWATYSFLSVAFAYFFFV), 195-215 (FYLVALIFAMGTSLGLATPLV), 231-251 (LDAIIITCWIVLNAICVACGL), 263-283 (SYLSFLMLGWVFIVSGASFIM), 316-336 (WTVFYWAWWVIYAIQMSIFLA), 347-367 (LCFGMVLGLTASTWILWTVLG), 403-423 (FSTATMWGFFILCFIATVTLI), 446-466 (LLVRIGWSVLVGVIGIVLLAL), and 475-495 (AIIAGGCPLFFVNIMVTLSFI).

The protein belongs to the BCCT transporter (TC 2.A.15) family. CaiT subfamily. Homotrimer.

It localises to the cell inner membrane. It catalyses the reaction 4-(trimethylamino)butanoate(in) + (R)-carnitine(out) = 4-(trimethylamino)butanoate(out) + (R)-carnitine(in). It functions in the pathway amine and polyamine metabolism; carnitine metabolism. Functionally, catalyzes the exchange of L-carnitine for gamma-butyrobetaine. This chain is L-carnitine/gamma-butyrobetaine antiporter, found in Citrobacter koseri (strain ATCC BAA-895 / CDC 4225-83 / SGSC4696).